A 534-amino-acid chain; its full sequence is Solute carrier family 22 member 15 (534 aa).

A helical transmembrane segment spans residues 22-42; the sequence is FLLAVLLQLYSATEAIIITIL. Residues N52, N58, and N83 are each glycosylated (N-linked (GlcNAc...) asparagine). Transmembrane regions (helical) follow at residues 97 to 117, 136 to 156, 161 to 181, 191 to 211, 216 to 236, 297 to 317, 327 to 347, 356 to 376, 391 to 411, 424 to 444, and 450 to 470; these read AAYE…IGVI, LALE…PLFL, LVGV…NECI, SLGS…GYFI, LLAL…LCIP, TLIM…LTLS, LNLA…MYLI, GSLA…MLVP, TLSL…YIYS, MGVC…IPAL, and ALPF…SLLL. N-linked (GlcNAc...) asparagine glycosylation is present at N513.

Belongs to the major facilitator (TC 2.A.1) superfamily. Organic cation transporter (TC 2.A.1.19) family.

The protein localises to the membrane. Probably transports organic cations. The protein is Solute carrier family 22 member 15 (slc22a15) of Xenopus tropicalis (Western clawed frog).